The sequence spans 632 residues: Chaperone protein HtpG (632 aa).

The interval M1–R343 is a; substrate-binding. The tract at residues E344 to K560 is b. Positions L561–K632 are c.

Belongs to the heat shock protein 90 family. Homodimer.

It is found in the cytoplasm. Molecular chaperone. Has ATPase activity. The chain is Chaperone protein HtpG from Aliivibrio salmonicida (strain LFI1238) (Vibrio salmonicida (strain LFI1238)).